Here is a 162-residue protein sequence, read N- to C-terminus: Large ribosomal subunit protein uL10 (162 aa).

Belongs to the universal ribosomal protein uL10 family. In terms of assembly, part of the ribosomal stalk of the 50S ribosomal subunit. The N-terminus interacts with L11 and the large rRNA to form the base of the stalk. The C-terminus forms an elongated spine to which L12 dimers bind in a sequential fashion forming a multimeric L10(L12)X complex.

In terms of biological role, forms part of the ribosomal stalk, playing a central role in the interaction of the ribosome with GTP-bound translation factors. The sequence is that of Large ribosomal subunit protein uL10 from Aliarcobacter butzleri (strain RM4018) (Arcobacter butzleri).